Consider the following 456-residue polypeptide: Multidrug resistance protein NorM (456 aa).

The next 12 helical transmembrane spans lie at 11-31, 53-73, 92-112, 126-146, 159-179, 189-209, 242-262, 268-288, 314-334, 356-376, 385-405, and 417-437; these read LIKLATPVLIASVAQTGMGFV, IWLPSILFGIGLLMALVPVVA, VVLALLISIPIIGVLLQTQFI, TVGYIHAVIFAVPAFLLFQTL, AMVIGFIGLLLNIPLNWIFVY, GVGCGVATTIVYWVMFALLLA, FPVAAALFFEVTLFAVVALLV, IIVAAHQVAINFSSLVFMLPM, SRVGIMVGLALATITAIITVL, LLLFAAVYQCTDAVQVIAAGA, AIFNRTFIAYWILGLPTGYIL, and AQGFWLGFIIGLTAAALMLGV.

This sequence belongs to the multi antimicrobial extrusion (MATE) (TC 2.A.66.1) family.

It is found in the cell inner membrane. In terms of biological role, multidrug efflux pump that functions as a Na(+)/drug antiporter. Confers resistance to several drugs, such as norfloxacin, ciprofloxacin, ethidium, kanamycin and streptomycin. The polypeptide is Multidrug resistance protein NorM (norM) (Vibrio parahaemolyticus serotype O3:K6 (strain RIMD 2210633)).